Reading from the N-terminus, the 243-residue chain is 1-(5-phosphoribosyl)-5-[(5-phosphoribosylamino)methylideneamino] imidazole-4-carboxamide isomerase (243 aa).

The active-site Proton acceptor is the Asp9. The Proton donor role is filled by Asp131.

Belongs to the HisA/HisF family.

It is found in the cytoplasm. The catalysed reaction is 1-(5-phospho-beta-D-ribosyl)-5-[(5-phospho-beta-D-ribosylamino)methylideneamino]imidazole-4-carboxamide = 5-[(5-phospho-1-deoxy-D-ribulos-1-ylimino)methylamino]-1-(5-phospho-beta-D-ribosyl)imidazole-4-carboxamide. The protein operates within amino-acid biosynthesis; L-histidine biosynthesis; L-histidine from 5-phospho-alpha-D-ribose 1-diphosphate: step 4/9. The protein is 1-(5-phosphoribosyl)-5-[(5-phosphoribosylamino)methylideneamino] imidazole-4-carboxamide isomerase of Campylobacter jejuni (strain RM1221).